Consider the following 817-residue polypeptide: Disks large homolog 3 (817 aa).

N-acetylmethionine is present on residues Met-1 and His-2. A disordered region spans residues 33 to 101; sequence WQVPDPYGPG…GKSTPKLNGS (69 aa). The span at 40–53 shows a compositional bias: gly residues; that stretch reads GPGGGNGASAGYGG. Positions 57-69 are enriched in polar residues; the sequence is QTLPSQAGATPTP. PDZ domains follow at residues 130–217, 226–311, and 379–465; these read EEIV…VRRR, EVNL…KVAK, and DFTR…VAQY. Phosphoserine is present on Ser-139. The SH3 domain occupies 501 to 571; sequence KRSLYVRALF…PSKKRVEKKE (71 aa). Positions 627–802 constitute a Guanylate kinase-like domain; it reads ARPVIILGPM…IYNKIKQIIE (176 aa). At Tyr-673 the chain carries Phosphotyrosine.

It belongs to the MAGUK family. As to quaternary structure, interacts through its PDZ domains with NETO1, GRIN2B and SYNGAP1. Interacts through its guanylate kinase-like domain with DLGAP1, DLGAP2, DLGAP3 and DLGAP4. Interacts with FLTP/C1orf192. Interacts through its PDZ domains with APC. Interacts through its first two PDZ domains with ERBB4. Interacts through its third PDZ domain with NLGN1, and probably with NLGN2 and NLGN3. Interacts with FRMPD4 (via C-terminus). Interacts with LRFN1, LRFN2 and LRFN4. Interacts with DGKI (via PDZ-binding motif).

Its function is as follows. Required for learning most likely through its role in synaptic plasticity following NMDA receptor signaling. The chain is Disks large homolog 3 (DLG3) from Homo sapiens (Human).